The chain runs to 215 residues: MTQSLADMRRDYTRDGLSEAQAPAEPFALFHQWFADAVKTEQPPVEANAMTVATVDTDGRPHCRILLLKGLDEQGFTFFTNYESAKGQQLAARPFAAMTFFWPTLERQVRIEGRVVKVTPQESDAYYQVRPLGSRLGAWASPQSRVIADRDELQELLKATEARFSDSQPDCPEHWGGYRLLPERIEFWQGRPSRLHDRLNYRLQGQEWVRERLAP.

Residues 9-12 (RRDY) and Lys69 each bind substrate. Residues 64 to 69 (RILLLK), 79 to 80 (FT), Lys86, and Gln108 contribute to the FMN site. Substrate contacts are provided by Tyr126, Arg130, and Ser134. FMN-binding positions include 143–144 (QS) and Trp188. 194 to 196 (RLH) lines the substrate pocket. Arg198 lines the FMN pocket.

It belongs to the pyridoxamine 5'-phosphate oxidase family. As to quaternary structure, homodimer. FMN serves as cofactor.

It carries out the reaction pyridoxamine 5'-phosphate + O2 + H2O = pyridoxal 5'-phosphate + H2O2 + NH4(+). The catalysed reaction is pyridoxine 5'-phosphate + O2 = pyridoxal 5'-phosphate + H2O2. It participates in cofactor metabolism; pyridoxal 5'-phosphate salvage; pyridoxal 5'-phosphate from pyridoxamine 5'-phosphate: step 1/1. The protein operates within cofactor metabolism; pyridoxal 5'-phosphate salvage; pyridoxal 5'-phosphate from pyridoxine 5'-phosphate: step 1/1. Catalyzes the oxidation of either pyridoxine 5'-phosphate (PNP) or pyridoxamine 5'-phosphate (PMP) into pyridoxal 5'-phosphate (PLP). This chain is Pyridoxine/pyridoxamine 5'-phosphate oxidase, found in Pseudomonas fluorescens (strain ATCC BAA-477 / NRRL B-23932 / Pf-5).